Here is a 244-residue protein sequence, read N- to C-terminus: Probable fimbrial assembly protein FimC, serogroup H1 (244 aa).

This is Probable fimbrial assembly protein FimC, serogroup H1 (fimC) from Dichelobacter nodosus (Bacteroides nodosus).